Reading from the N-terminus, the 469-residue chain is Dynein axonemal assembly factor 11 (469 aa).

4 LRR repeats span residues 20–43 (IFSLEEISLHQQDLERIEHIDKWC), 44–65 (RELKILYLQNNLIGKIENVSKL), 66–89 (KKLEYLNLALNNIEKIENLEGCES), and 90–110 (LQKLDLTVNFVGELSSINSLQ). Residues 114 to 135 (HLRELYLVGNPCAEYEGYRQYV) form the LRRCT domain. Composition is skewed to basic and acidic residues over residues 179 to 213 (KRAAEREEARSKLQGKQKESRKTQEKKPGFDRRWY) and 261 to 286 (SRLETHRYLEEKRKSKESSSEGELKK). Disordered stretches follow at residues 179–290 (KRAA…KPPR) and 436–469 (KTQAQGPLQFHKNKVKDTEDSEDFIDNTDVPPLM).

The protein belongs to the tilB family.

It is found in the cytoplasm. It localises to the cell projection. The protein resides in the cilium. Its subcellular location is the dynein axonemal particle. The protein localises to the flagellum. Involved in dynein arm assembly, is important for expression and transporting outer dynein arm (ODA) proteins from the cytoplasm to the cilia. The protein is Dynein axonemal assembly factor 11 (dnaaf11) of Xenopus laevis (African clawed frog).